Reading from the N-terminus, the 454-residue chain is tRNA modification GTPase MnmE (454 aa).

(6S)-5-formyl-5,6,7,8-tetrahydrofolate is bound by residues arginine 23, glutamate 80, and lysine 120. In terms of domain architecture, TrmE-type G spans 216 to 377; sequence GMKVVIAGRP…LRSHLKEAMG (162 aa). Asparagine 226 is a K(+) binding site. Residues 226 to 231, 245 to 251, 270 to 273, and 358 to 360 each bind GTP; these read NAGKSS, TDIAGTT, DTAG, and SAR. Position 230 (serine 230) interacts with Mg(2+). Residues threonine 245, isoleucine 247, and threonine 250 each contribute to the K(+) site. Threonine 251 serves as a coordination point for Mg(2+). Lysine 454 contributes to the (6S)-5-formyl-5,6,7,8-tetrahydrofolate binding site.

It belongs to the TRAFAC class TrmE-Era-EngA-EngB-Septin-like GTPase superfamily. TrmE GTPase family. As to quaternary structure, homodimer. Heterotetramer of two MnmE and two MnmG subunits. K(+) serves as cofactor.

Its subcellular location is the cytoplasm. Functionally, exhibits a very high intrinsic GTPase hydrolysis rate. Involved in the addition of a carboxymethylaminomethyl (cmnm) group at the wobble position (U34) of certain tRNAs, forming tRNA-cmnm(5)s(2)U34. The chain is tRNA modification GTPase MnmE from Proteus mirabilis (strain HI4320).